The sequence spans 86 residues: Apolipoprotein C-I (86 aa).

Residues 1–26 form the signal peptide; the sequence is MRLFLSLPVLVVALLMILEGPGPAQG.

This sequence belongs to the apolipoprotein C1 family.

The protein localises to the secreted. Its function is as follows. Inhibitor of lipoprotein binding to the low density lipoprotein (LDL) receptor, LDL receptor-related protein, and very low density lipoprotein (VLDL) receptor. Associates with high density lipoproteins (HDL) and the triacylglycerol-rich lipoproteins in the plasma and makes up about 10% of the protein of the VLDL and 2% of that of HDL. Appears to interfere directly with fatty acid uptake and is also the major plasma inhibitor of cholesteryl ester transfer protein (CETP). Binds free fatty acids and reduces their intracellular esterification. Modulates the interaction of APOE with beta-migrating VLDL and inhibits binding of beta-VLDL to the LDL receptor-related protein. The chain is Apolipoprotein C-I (APOC1) from Aotus nancymaae (Ma's night monkey).